Here is a 182-residue protein sequence, read N- to C-terminus: MVFDSFDIKSLIRPVIDFPKPGVIFRDITPLFQSPKALRLVMDSFAHRYVEADFTHIGAMDARGFLIGSVLAYQLNKPLVLFRKQGKLPADVLAEGYATEYGEAFLEVHADSLCEGDSVVMFDDLIATGGTLIAAANLIRRMGARVHEAAAIIDLPELGGSQRLEDMGIPTFCLTQFALTDK.

Belongs to the purine/pyrimidine phosphoribosyltransferase family. As to quaternary structure, homodimer.

The protein localises to the cytoplasm. The catalysed reaction is AMP + diphosphate = 5-phospho-alpha-D-ribose 1-diphosphate + adenine. Its pathway is purine metabolism; AMP biosynthesis via salvage pathway; AMP from adenine: step 1/1. Catalyzes a salvage reaction resulting in the formation of AMP, that is energically less costly than de novo synthesis. This chain is Adenine phosphoribosyltransferase, found in Pseudomonas fluorescens (strain Pf0-1).